The sequence spans 214 residues: Endothelin-3 (214 aa).

The first 16 residues, 1–16, serve as a signal peptide directing secretion; that stretch reads MEPGLWLLLGLTVTSA. The propeptide occupies 17–94; that stretch reads AGLVPCPQSG…DKGLPAHHRP (78 aa). The segment at 24–91 is disordered; that stretch reads QSGDSGRASV…KQEDKGLPAH (68 aa). Residues 25–35 show a composition bias toward polar residues; that stretch reads SGDSGRASVSQ. 2 disulfide bridges follow: C97–C111 and C99–C107. Positions 118 to 214 are excised as a propeptide; that stretch reads INTPEQTVPY…MSRTDKAHRP (97 aa). The tract at residues 159–173 is endothelin-like; it reads CTCMGADDKACAHFC. A disordered region spans residues 183-214; the sequence is SGRAERPAAEEMRETGGPRQRLMSRTDKAHRP. Over residues 185 to 198 the composition is skewed to basic and acidic residues; it reads RAERPAAEEMRETG.

Belongs to the endothelin/sarafotoxin family.

The protein resides in the secreted. Endothelins are endothelium-derived vasoconstrictor peptides. In Mus musculus (Mouse), this protein is Endothelin-3 (Edn3).